A 122-amino-acid chain; its full sequence is Large ribosomal subunit protein uL14 (122 aa).

It belongs to the universal ribosomal protein uL14 family. As to quaternary structure, part of the 50S ribosomal subunit. Forms a cluster with proteins L3 and L19. In the 70S ribosome, L14 and L19 interact and together make contacts with the 16S rRNA in bridges B5 and B8.

Its function is as follows. Binds to 23S rRNA. Forms part of two intersubunit bridges in the 70S ribosome. This Dechloromonas aromatica (strain RCB) protein is Large ribosomal subunit protein uL14.